Reading from the N-terminus, the 151-residue chain is Large ribosomal subunit protein uL15 (151 aa).

The segment at 1-57 is disordered; sequence MTLRLDSLKANKGARRRKLRKGRGIAAGQGASCGFGMRGQKSRSGRPTRPGFEGGQM. Residues 12-23 are compositionally biased toward basic residues; that stretch reads KGARRRKLRKGR. The segment covering 25-37 has biased composition (gly residues); the sequence is IAAGQGASCGFGM.

Belongs to the universal ribosomal protein uL15 family. Part of the 50S ribosomal subunit.

Its function is as follows. Binds to the 23S rRNA. The protein is Large ribosomal subunit protein uL15 of Synechococcus sp. (strain CC9902).